We begin with the raw amino-acid sequence, 395 residues long: Leukosialin (395 aa).

A signal peptide spans 1–19 (MALHLLLLFGACWVQVASP). Topologically, residues 20–248 (DSLQRTTMLP…TRSPSQESSG (229 aa)) are extracellular. Polar residues predominate over residues 27 to 56 (MLPSTPHITAPSTSEAQNASPSVSVGSGTV). Positions 27–245 (MLPSTPHITA…PITTRSPSQE (219 aa)) are disordered. Low complexity predominate over residues 73-88 (SLTPLETTELSSLETS). Composition is skewed to polar residues over residues 89–111 (AGAS…SKTS) and 145–154 (TAASTSISKG). A compositionally biased stretch (low complexity) spans 155–166 (TSAPPTTVTTSS). A glycan (N-linked (GlcNAc...) asparagine) is linked at Asn-167. Polar residues predominate over residues 167–196 (NETSGPSVATTVSSKTSGPPVTTATGSLGP). Residues 205-241 (ATTATSSVESSSVARGTSVSSRKTSTTSTQDPITTRS) are compositionally biased toward low complexity. A helical transmembrane segment spans residues 249 to 271 (MLLVPMLIALVVVLALVALLLLW). A required for interaction with EZR, MSN and RDX and for co-localization to microvilli region spans residues 272 to 302 (RQRQKRRTGALTLSGGGKRNGVVDAWAGPAR). Residues 272–395 (RQRQKRRTGA…AKDEAAPQSL (124 aa)) are Cytoplasmic-facing. The short motif at 276–290 (KRRTGALTLSGGGKR) is the Nuclear localization signal element. A phosphoserine mark is found at Ser-285 and Ser-328. The tract at residues 303–395 (VPDEEATTTS…AKDEAAPQSL (93 aa)) is disordered. A compositionally biased stretch (polar residues) spans 327–338 (GSGQRPTLTTFF). Residue Thr-333 is modified to Phosphothreonine. Phosphoserine is present on residues Ser-339 and Ser-343. Position 347 is a phosphoserine; by PKC/PRKCQ (Ser-347). Residue Ser-371 is modified to Phosphoserine. At Thr-378 the chain carries Phosphothreonine. The span at 385-395 (QAKDEAAPQSL) shows a compositional bias: basic and acidic residues.

As to quaternary structure, interacts with SIGLEC1. Interacts with isoform 2 of HIPK2. Interacts with CTNNB1. Interacts with RDX (via FERM domain). Interacts with EZR. Interacts with MSN. Post-translationally, phosphorylation at Ser-347 is regulated by chemokines, requires its association with ERM proteins (EZR, RDX and MSN) and is essential for its function in the regulation of T-cell trafficking to lymph nodes. Has a high content of sialic acid and O-linked carbohydrate structures. In terms of processing, cleavage by CTSG releases its extracellular domain and triggers its intramembrane proteolysis by gamma-secretase releasing the CD43 cytoplasmic tail chain (CD43-ct) which translocates to the nucleus. Post-translationally, sumoylated. As to expression, cell surface of thymocytes, T-lymphocytes, neutrophils, plasma cells and myelomas.

Its subcellular location is the membrane. It is found in the cell projection. The protein localises to the microvillus. The protein resides in the uropodium. It localises to the nucleus. Its subcellular location is the PML body. Its function is as follows. Predominant cell surface sialoprotein of leukocytes which regulates multiple T-cell functions, including T-cell activation, proliferation, differentiation, trafficking and migration. Positively regulates T-cell trafficking to lymph-nodes via its association with ERM proteins (EZR, RDX and MSN). Negatively regulates Th2 cell differentiation and predisposes the differentiation of T-cells towards a Th1 lineage commitment. Promotes the expression of IFN-gamma by T-cells during T-cell receptor (TCR) activation of naive cells and induces the expression of IFN-gamma by CD4(+) T-cells and to a lesser extent by CD8(+) T-cells. Plays a role in preparing T-cells for cytokine sensing and differentiation into effector cells by inducing the expression of cytokine receptors IFNGR and IL4R, promoting IFNGR and IL4R signaling and by mediating the clustering of IFNGR with TCR. Acts as a major E-selectin ligand responsible for Th17 cell rolling on activated vasculature and recruitment during inflammation. Mediates Th17 cells, but not Th1 cells, adhesion to E-selectin. Acts as a T-cell counter-receptor for SIGLEC1. In terms of biological role, protects cells from apoptotic signals, promoting cell survival. This Mus musculus (Mouse) protein is Leukosialin (Spn).